Reading from the N-terminus, the 717-residue chain is Fatty acid oxidation complex subunit alpha (717 aa).

The enoyl-CoA hydratase stretch occupies residues 1–190 (MESTSAFNLQ…KAGLVDDVVP (190 aa)). The 3-hydroxyacyl-CoA dehydrogenase stretch occupies residues 306–717 (RALHSVGVLG…AGNLQAEMTV (412 aa)).

The protein in the N-terminal section; belongs to the enoyl-CoA hydratase/isomerase family. It in the central section; belongs to the 3-hydroxyacyl-CoA dehydrogenase family. In terms of assembly, heterotetramer of two alpha chains (FadJ) and two beta chains (FadI).

The protein resides in the cytoplasm. The enzyme catalyses a (3S)-3-hydroxyacyl-CoA = a (2E)-enoyl-CoA + H2O. It carries out the reaction a 4-saturated-(3S)-3-hydroxyacyl-CoA = a (3E)-enoyl-CoA + H2O. The catalysed reaction is a (3S)-3-hydroxyacyl-CoA + NAD(+) = a 3-oxoacyl-CoA + NADH + H(+). It catalyses the reaction (3S)-3-hydroxybutanoyl-CoA = (3R)-3-hydroxybutanoyl-CoA. Its pathway is lipid metabolism; fatty acid beta-oxidation. In terms of biological role, catalyzes the formation of a hydroxyacyl-CoA by addition of water on enoyl-CoA. Also exhibits 3-hydroxyacyl-CoA epimerase and 3-hydroxyacyl-CoA dehydrogenase activities. This is Fatty acid oxidation complex subunit alpha from Cronobacter sakazakii (strain ATCC BAA-894) (Enterobacter sakazakii).